The sequence spans 148 residues: PTS system fructose-like EIIA component (148 aa).

Residues 2-145 enclose the PTS EIIA type-2 domain; the sequence is AALTASCIDL…DQVLALLNQT (144 aa). The Tele-phosphohistidine intermediate role is filled by H64. A Phosphohistidine; by HPr modification is found at H64.

It is found in the cytoplasm. The phosphoenolpyruvate-dependent sugar phosphotransferase system (sugar PTS), a major carbohydrate active transport system, catalyzes the phosphorylation of incoming sugar substrates concomitantly with their translocation across the cell membrane. The enzyme II FrvAB PTS system is involved in fructose transport. The chain is PTS system fructose-like EIIA component from Escherichia coli (strain K12).